The primary structure comprises 408 residues: MNNMLDIWQSRLQEHIKETRTYMKYMLNDHLVIVLIFFLAGAASWYSKWIRDIPAHFPSFWVMAVLFSLVLTSSYVRTLLKEADLVFLLPLEAKMEPYLKQAFVYSYVSQLFPLIALSIVAMPLYFAVTPGASLVSYAAVFVQLLLLKAWNQVMEWRTTFQNDRSMKRMDVIIRFAANTLVLYFVFQSVYMYALLVYVIMAVLYLYMSSAAKRKTFKWESHIESELRRKQRFYRIANLFTDVPHLRKQAKRRAYLDFLLRLVPFEQRKTFAYMFTRAFLRSSDYLGILVRLTIVFALIIMYVSASPLIAAVLTVFAIFITGIQLLPLFGHFDHLALQELYPVQKETKLKSYFSLLKTALSIQALLMSVASAYAAGLTGFLYALIGSAVLIFVVLPAYMTTRLKKHGKL.

A run of 9 helical transmembrane segments spans residues 30–50 (HLVIVLIFFLAGAASWYSKWI), 53–73 (IPAHFPSFWVMAVLFSLVLTS), 111–131 (LFPLIALSIVAMPLYFAVTPG), 134–154 (LVSYAAVFVQLLLLKAWNQVM), 180–200 (LVLYFVFQSVYMYALLVYVIM), 284–304 (YLGILVRLTIVFALIIMYVSA), 308–328 (IAAVLTVFAIFITGIQLLPLF), 351–371 (YFSLLKTALSIQALLMSVASA), and 374–394 (AGLTGFLYALIGSAVLIFVVL).

The protein resides in the cell membrane. Functionally, presumed to form part of an ABC-transporter, it may form a transport channel. The protein is Protein EcsB (ecsB) of Bacillus subtilis (strain 168).